The chain runs to 128 residues: MARQQRRGRKVKKNVPNGVAYIQSTFNNTIVTITDPNGDVVSWASAGSTGFKGAKKGTPFAAQMAAESAARQAMENGMRQIEVMVSGPGAGRETAIRALQATGLEITLIRDITPIPHNGCRPPKRRRV.

It belongs to the universal ribosomal protein uS11 family. In terms of assembly, part of the 30S ribosomal subunit. Interacts with proteins S7 and S18. Binds to IF-3.

Its function is as follows. Located on the platform of the 30S subunit, it bridges several disparate RNA helices of the 16S rRNA. Forms part of the Shine-Dalgarno cleft in the 70S ribosome. This chain is Small ribosomal subunit protein uS11, found in Synechococcus sp. (strain JA-3-3Ab) (Cyanobacteria bacterium Yellowstone A-Prime).